A 206-amino-acid polypeptide reads, in one-letter code: Cytidylate kinase (206 aa).

Glycine 9–threonine 17 lines the ATP pocket. Residues leucine 155–alanine 168 are compositionally biased toward basic and acidic residues. A disordered region spans residues leucine 155–proline 174.

This sequence belongs to the cytidylate kinase family. Type 1 subfamily.

It is found in the cytoplasm. It carries out the reaction CMP + ATP = CDP + ADP. The enzyme catalyses dCMP + ATP = dCDP + ADP. The protein is Cytidylate kinase of Cereibacter sphaeroides (strain KD131 / KCTC 12085) (Rhodobacter sphaeroides).